The primary structure comprises 351 residues: Molybdenum import ATP-binding protein ModC (351 aa).

Positions 1–229 (MLKINVKKQL…PLFLPWKLED (229 aa)) constitute an ABC transporter domain. Position 31–38 (31–38 (GLSGSGKT)) interacts with ATP. The 63-residue stretch at 289–351 (KTSIRNILHG…FAQIKAVSVL (63 aa)) folds into the Mop domain.

This sequence belongs to the ABC transporter superfamily. Molybdate importer (TC 3.A.1.8) family. As to quaternary structure, the complex is composed of two ATP-binding proteins (ModC), two transmembrane proteins (ModB) and a solute-binding protein (ModA).

Its subcellular location is the cell inner membrane. It catalyses the reaction molybdate(out) + ATP + H2O = molybdate(in) + ADP + phosphate + H(+). Its function is as follows. Part of the ABC transporter complex ModABC involved in molybdenum import. Responsible for energy coupling to the transport system. This chain is Molybdenum import ATP-binding protein ModC, found in Pasteurella multocida (strain Pm70).